Here is a 29-residue protein sequence, read N- to C-terminus: Myosin heavy chain, muscle (29 aa).

The segment covering 1–16 (SKYESEGVARSEELQE) has biased composition (basic and acidic residues). Residues 1–29 (SKYESEGVARSEELQEVHQAFADAGRKPI) are disordered.

Muscle myosin is a hexameric protein that consists of 2 heavy chain subunits (MHC), 2 alkali light chain subunits (MLC) and 2 regulatory light chain subunits (MLC-2).

Its subcellular location is the cytoplasm. The protein localises to the myofibril. Muscle contraction. In Bombyx mori (Silk moth), this protein is Myosin heavy chain, muscle.